The sequence spans 294 residues: Protein PET54 (294 aa).

Its subcellular location is the mitochondrion inner membrane. Its function is as follows. Activator of specific mitochondrial mRNAs. PET54 is involved in the excision of intron aI5-beta from pre-mRNA for cytochrome c oxidase I (COX1) and plays a role in promoting the translation of COX3. The polypeptide is Protein PET54 (PET54) (Saccharomyces bayanus (Yeast)).